A 312-amino-acid polypeptide reads, in one-letter code: Ribonuclease HIII (312 aa).

The RNase H type-2 domain occupies 95–311; the sequence is FNCIGSDEAG…REKAQKILKP (217 aa). A divalent metal cation is bound by residues Asp101, Glu102, and Asp206.

It belongs to the RNase HII family. RnhC subfamily. It depends on Mn(2+) as a cofactor. The cofactor is Mg(2+).

Its subcellular location is the cytoplasm. The enzyme catalyses Endonucleolytic cleavage to 5'-phosphomonoester.. Endonuclease that specifically degrades the RNA of RNA-DNA hybrids. The chain is Ribonuclease HIII from Staphylococcus aureus (strain USA300).